The following is a 392-amino-acid chain: Integrin-linked kinase-associated serine/threonine phosphatase 2C (392 aa).

Met-1 is subject to N-acetylmethionine. Positions 1–90 (MDLFGDLPEP…TSEEEKNGSE (90 aa)) are disordered. Ser-13 bears the Phosphoserine mark. Over residues 56–70 (SGDSGSLATSISQMV) the composition is skewed to polar residues. A compositionally biased stretch (basic and acidic residues) spans 72-90 (TEGKGAKRKTSEEEKNGSE). A PPM-type phosphatase domain is found at 108–390 (KGYVAERKGE…DNVTVMVVRI (283 aa)). Mn(2+) contacts are provided by Asp-152 and Gly-153. An N6-acetyllysine modification is found at Lys-210. Mn(2+) contacts are provided by Asp-326 and Asp-381.

Belongs to the PP2C family. In terms of assembly, interacts with ILK. Specific association with ILK is independent of the catalytic activity of either partner. It depends on Mg(2+) as a cofactor. Requires Mn(2+) as cofactor. Widely expressed. Highest levels expressed in striated muscle. Much lower levels evident in various smooth muscle tissues.

The protein resides in the cytoplasm. It carries out the reaction O-phospho-L-seryl-[protein] + H2O = L-seryl-[protein] + phosphate. The enzyme catalyses O-phospho-L-threonyl-[protein] + H2O = L-threonyl-[protein] + phosphate. With respect to regulation, inhibited rather than stimulated by magnesium. Functionally, protein phosphatase that may play a role in regulation of cell cycle progression via dephosphorylation of its substrates whose appropriate phosphorylation states might be crucial for cell proliferation. Selectively associates with integrin linked kinase (ILK), to modulate cell adhesion and growth factor signaling. Inhibits the ILK-GSK3B signaling axis and may play an important role in inhibiting oncogenic transformation. This is Integrin-linked kinase-associated serine/threonine phosphatase 2C (ILKAP) from Homo sapiens (Human).